Consider the following 101-residue polypeptide: C-X-C motif chemokine 3 (101 aa).

The signal sequence occupies residues 1–32 (MAPPTRRLLNAALLLLLLLMATSHQPSGTVVA). 2 cysteine pairs are disulfide-bonded: cysteine 37/cysteine 63 and cysteine 39/cysteine 79.

Belongs to the intercrine alpha (chemokine CxC) family.

It is found in the secreted. Ligand for CXCR2. Has chemotactic activity for neutrophils. May play a role in inflammation and exert its effects on endothelial cells in an autocrine fashion. The chain is C-X-C motif chemokine 3 (Cxcl3) from Rattus norvegicus (Rat).